The sequence spans 645 residues: Threonine--tRNA ligase (645 aa).

Residues 1–63 (MEQINIQFPD…ETDGSIEIVT (63 aa)) enclose the TGS domain. The catalytic stretch occupies residues 242–540 (DHRKIGKELE…LTEETKGAFP (299 aa)). Residues Cys-336, His-387, and His-517 each contribute to the Zn(2+) site.

This sequence belongs to the class-II aminoacyl-tRNA synthetase family. As to quaternary structure, homodimer. The cofactor is Zn(2+).

It is found in the cytoplasm. It carries out the reaction tRNA(Thr) + L-threonine + ATP = L-threonyl-tRNA(Thr) + AMP + diphosphate + H(+). Functionally, catalyzes the attachment of threonine to tRNA(Thr) in a two-step reaction: L-threonine is first activated by ATP to form Thr-AMP and then transferred to the acceptor end of tRNA(Thr). Also edits incorrectly charged L-seryl-tRNA(Thr). This is Threonine--tRNA ligase from Staphylococcus aureus (strain bovine RF122 / ET3-1).